A 429-amino-acid polypeptide reads, in one-letter code: Cyclin-B2-3 (429 aa).

The span at 86-101 (ADHKPHIRDEETKKPD) shows a compositional bias: basic and acidic residues. The segment at 86-109 (ADHKPHIRDEETKKPDSVSSEEPE) is disordered.

Belongs to the cyclin family. Cyclin AB subfamily.

This Arabidopsis thaliana (Mouse-ear cress) protein is Cyclin-B2-3 (CYCB2-3).